The chain runs to 421 residues: N-succinylarginine dihydrolase (421 aa).

Residues A19–S28, N105, and H132–R133 contribute to the substrate site. E167 is an active-site residue. R199 provides a ligand contact to substrate. Residue H235 is part of the active site. Substrate contacts are provided by D237 and N346. Catalysis depends on C352, which acts as the Nucleophile.

This sequence belongs to the succinylarginine dihydrolase family. As to quaternary structure, homodimer.

It catalyses the reaction N(2)-succinyl-L-arginine + 2 H2O + 2 H(+) = N(2)-succinyl-L-ornithine + 2 NH4(+) + CO2. It functions in the pathway amino-acid degradation; L-arginine degradation via AST pathway; L-glutamate and succinate from L-arginine: step 2/5. Functionally, catalyzes the hydrolysis of N(2)-succinylarginine into N(2)-succinylornithine, ammonia and CO(2). This is N-succinylarginine dihydrolase from Novosphingobium aromaticivorans (strain ATCC 700278 / DSM 12444 / CCUG 56034 / CIP 105152 / NBRC 16084 / F199).